A 559-amino-acid chain; its full sequence is DNA ligase (559 aa).

Residue glutamate 247 coordinates ATP. The active-site N6-AMP-lysine intermediate is the lysine 249. Residues arginine 254, arginine 269, glutamate 299, phenylalanine 339, arginine 414, and lysine 420 each contribute to the ATP site.

It belongs to the ATP-dependent DNA ligase family. The cofactor is Mg(2+).

The catalysed reaction is ATP + (deoxyribonucleotide)n-3'-hydroxyl + 5'-phospho-(deoxyribonucleotide)m = (deoxyribonucleotide)n+m + AMP + diphosphate.. In terms of biological role, DNA ligase that seals nicks in double-stranded DNA during DNA replication, DNA recombination and DNA repair. The protein is DNA ligase of Pyrococcus abyssi.